The chain runs to 400 residues: Acetate kinase (400 aa).

Asn7 lines the Mg(2+) pocket. Lys14 is an ATP binding site. Residue Arg90 participates in substrate binding. Asp147 (proton donor/acceptor) is an active-site residue. Residues 207–211, 282–284, and 331–335 each bind ATP; these read HLGNG, DFR, and GIGEN. Glu384 is a Mg(2+) binding site.

This sequence belongs to the acetokinase family. In terms of assembly, homodimer. Mg(2+) is required as a cofactor. The cofactor is Mn(2+).

Its subcellular location is the cytoplasm. It catalyses the reaction acetate + ATP = acetyl phosphate + ADP. It functions in the pathway metabolic intermediate biosynthesis; acetyl-CoA biosynthesis; acetyl-CoA from acetate: step 1/2. Catalyzes the formation of acetyl phosphate from acetate and ATP. Can also catalyze the reverse reaction. This chain is Acetate kinase, found in Thermoanaerobacterium thermosaccharolyticum (strain ATCC 7956 / DSM 571 / NCIMB 9385 / NCA 3814 / NCTC 13789 / WDCM 00135 / 2032) (Clostridium thermosaccharolyticum).